Here is a 451-residue protein sequence, read N- to C-terminus: Glucose-6-phosphate isomerase (451 aa).

Residue Glu-291 is the Proton donor of the active site. Catalysis depends on residues His-312 and Lys-426.

This sequence belongs to the GPI family.

It localises to the cytoplasm. It carries out the reaction alpha-D-glucose 6-phosphate = beta-D-fructose 6-phosphate. It participates in carbohydrate biosynthesis; gluconeogenesis. The protein operates within carbohydrate degradation; glycolysis; D-glyceraldehyde 3-phosphate and glycerone phosphate from D-glucose: step 2/4. Its function is as follows. Catalyzes the reversible isomerization of glucose-6-phosphate to fructose-6-phosphate. The sequence is that of Glucose-6-phosphate isomerase from Caldanaerobacter subterraneus subsp. tengcongensis (strain DSM 15242 / JCM 11007 / NBRC 100824 / MB4) (Thermoanaerobacter tengcongensis).